The primary structure comprises 274 residues: 2,3,4,5-tetrahydropyridine-2,6-dicarboxylate N-succinyltransferase (274 aa).

Residues Arg-104 and Asp-141 each contribute to the substrate site.

The protein belongs to the transferase hexapeptide repeat family. As to quaternary structure, homotrimer.

The protein localises to the cytoplasm. It catalyses the reaction (S)-2,3,4,5-tetrahydrodipicolinate + succinyl-CoA + H2O = (S)-2-succinylamino-6-oxoheptanedioate + CoA. Its pathway is amino-acid biosynthesis; L-lysine biosynthesis via DAP pathway; LL-2,6-diaminopimelate from (S)-tetrahydrodipicolinate (succinylase route): step 1/3. The chain is 2,3,4,5-tetrahydropyridine-2,6-dicarboxylate N-succinyltransferase (dapD) from Escherichia coli O157:H7.